The following is a 733-amino-acid chain: Protein psiM (733 aa).

The first 26 residues, 1 to 26, serve as a signal peptide directing secretion; that stretch reads MKKINNNKIFVLFLTILLYLLNITTA. Residues Asn-22, Asn-65, and Asn-96 are each glycosylated (N-linked (GlcNAc...) asparagine). At 27–672 the chain is on the extracellular side; it reads QKPVSINIKI…VCQKAALVST (646 aa). The PA14 domain occupies 114 to 260; it reads NYDSDSGNYI…YDYCGVCNGD (147 aa). N-linked (GlcNAc...) asparagine glycosylation is found at Asn-277, Asn-336, Asn-379, Asn-428, Asn-471, Asn-537, Asn-573, and Asn-641. The helical transmembrane segment at 673 to 693 threads the bilayer; sequence AVIASVVVVGAVVLGAAIFAG. At 694–733 the chain is on the cytoplasmic side; that stretch reads KKGYDAWKTSQGNVMAASQANPLYTQSSNGGENPLYNSPT.

This sequence belongs to the prespore-cell-inducing factor family.

It localises to the membrane. This Dictyostelium discoideum (Social amoeba) protein is Protein psiM (psiM).